Here is a 490-residue protein sequence, read N- to C-terminus: Betaine aldehyde dehydrogenase (490 aa).

Thr26, Ile27, and Asp93 together coordinate K(+). 150-152 contacts NAD(+); it reads GAW. The Charge relay system role is filled by Lys162. 176–179 contributes to the NAD(+) binding site; that stretch reads KPSE. Val180 contributes to the K(+) binding site. 230–233 contacts NAD(+); it reads GVAS. Residue Leu246 coordinates K(+). The active-site Proton acceptor is the Glu252. Gly254, Cys286, and Glu387 together coordinate NAD(+). The Nucleophile role is filled by Cys286. Cys286 is modified (cysteine sulfenic acid (-SOH)). K(+) contacts are provided by Lys457 and Gly460. Catalysis depends on Glu464, which acts as the Charge relay system.

Belongs to the aldehyde dehydrogenase family. Dimer of dimers. K(+) is required as a cofactor.

It carries out the reaction betaine aldehyde + NAD(+) + H2O = glycine betaine + NADH + 2 H(+). Its pathway is amine and polyamine biosynthesis; betaine biosynthesis via choline pathway; betaine from betaine aldehyde: step 1/1. Involved in the biosynthesis of the osmoprotectant glycine betaine. Catalyzes the irreversible oxidation of betaine aldehyde to the corresponding acid. The polypeptide is Betaine aldehyde dehydrogenase (Escherichia coli (strain SE11)).